Consider the following 478-residue polypeptide: Ribosomal RNA small subunit methyltransferase F (478 aa).

S-adenosyl-L-methionine-binding positions include 125–131 (AAAPGSK), Glu149, Asp176, and Asp194. The active-site Nucleophile is Cys247.

This sequence belongs to the class I-like SAM-binding methyltransferase superfamily. RsmB/NOP family.

The protein resides in the cytoplasm. The catalysed reaction is cytidine(1407) in 16S rRNA + S-adenosyl-L-methionine = 5-methylcytidine(1407) in 16S rRNA + S-adenosyl-L-homocysteine + H(+). In terms of biological role, specifically methylates the cytosine at position 1407 (m5C1407) of 16S rRNA. This chain is Ribosomal RNA small subunit methyltransferase F, found in Serratia proteamaculans (strain 568).